Reading from the N-terminus, the 969-residue chain is RNA polymerase-associated protein RapA (969 aa).

One can recognise a Helicase ATP-binding domain in the interval 164 to 334 (EVGRRHAPRV…FARLRLLDPD (171 aa)). Residue 177 to 184 (DEVGLGKT) coordinates ATP. Positions 280–283 (DEAH) match the DEAH box motif. In terms of domain architecture, Helicase C-terminal spans 492–646 (RVNWLLEKVK…TCPTGRAVYD (155 aa)).

It belongs to the SNF2/RAD54 helicase family. RapA subfamily. In terms of assembly, interacts with the RNAP. Has a higher affinity for the core RNAP than for the holoenzyme. Its ATPase activity is stimulated by binding to RNAP.

Its function is as follows. Transcription regulator that activates transcription by stimulating RNA polymerase (RNAP) recycling in case of stress conditions such as supercoiled DNA or high salt concentrations. Probably acts by releasing the RNAP, when it is trapped or immobilized on tightly supercoiled DNA. Does not activate transcription on linear DNA. Probably not involved in DNA repair. The protein is RNA polymerase-associated protein RapA of Vibrio campbellii (strain ATCC BAA-1116).